Reading from the N-terminus, the 241-residue chain is B9 domain-containing protein 1 (241 aa).

The segment at 1-42 (MSASEGISLPGNEETTPPHEKHKQKAKKAKKKSRSAKESVPN) is disordered. Positions 20 to 34 (EKHKQKAKKAKKKSR) are enriched in basic residues. In terms of domain architecture, C2 B9-type spans 53–197 (FSLSIVGQIV…TSWLLRREPE (145 aa)).

Belongs to the B9D family. In terms of assembly, probable component of the tectonic-like complex (also named MKS complex), composed of B9d1, B9d2, Cc2d2a, Mks1 and tctn. As to expression, expressed in type I sensory neurons (at protein level). Expressed in spermatids and spermatocytes (at protein level).

Its subcellular location is the cytoplasm. The protein resides in the cytoskeleton. The protein localises to the cilium basal body. Its function is as follows. Probable component of the tectonic-like complex (also named MKS complex), a complex localized at the transition zone of primary cilia. Required for ciliary structure and function. The protein is B9 domain-containing protein 1 of Drosophila melanogaster (Fruit fly).